Here is a 252-residue protein sequence, read N- to C-terminus: Phosphoglycolate phosphatase (252 aa).

The Nucleophile role is filled by Asp-13. 3 residues coordinate Mg(2+): Asp-13, Asp-15, and Asp-192.

It belongs to the HAD-like hydrolase superfamily. CbbY/CbbZ/Gph/YieH family. Monomer. The cofactor is Mg(2+). Requires chloride as cofactor.

The enzyme catalyses 2-phosphoglycolate + H2O = glycolate + phosphate. It participates in organic acid metabolism; glycolate biosynthesis; glycolate from 2-phosphoglycolate: step 1/1. In terms of biological role, specifically catalyzes the dephosphorylation of 2-phosphoglycolate. Is involved in the dissimilation of the intracellular 2-phosphoglycolate formed during the DNA repair of 3'-phosphoglycolate ends, a major class of DNA lesions induced by oxidative stress. This Shigella dysenteriae serotype 1 (strain Sd197) protein is Phosphoglycolate phosphatase.